The sequence spans 243 residues: MKDTLFNKSLNKRFCFDEKVAHVFDDMLERSIPYYHEMLNLGAYFIAQNLKENIHPKPLPKPLIYDLGCSTGNFFIALNQQIQQDIELVGIDNSMPMLKKAQEKLKDFNNVRFECMDFLEVEFKEASAFSLLFVLQFVRPMQREVLLKKIYNSLALNGVLLVGEKIMSEDRILDKQMIELYYLYKQNQGYSHNEIAFKREALENVLVPYSLKENVALLESVGFKHVEAVFKWVNFTLLVARKT.

S-adenosyl-L-methionine-binding positions include tyrosine 35, 68–70 (GCS), 92–93 (DN), and arginine 199.

It belongs to the class I-like SAM-binding methyltransferase superfamily. Cx-SAM synthase family. In terms of assembly, homodimer.

The enzyme catalyses prephenate + S-adenosyl-L-methionine = carboxy-S-adenosyl-L-methionine + 3-phenylpyruvate + H2O. Functionally, catalyzes the conversion of S-adenosyl-L-methionine (SAM) to carboxy-S-adenosyl-L-methionine (Cx-SAM). The polypeptide is Carboxy-S-adenosyl-L-methionine synthase (Helicobacter pylori (strain P12)).